The primary structure comprises 229 residues: uncharacterized protein (229 aa).

This is an uncharacterized protein from Methanocaldococcus jannaschii (strain ATCC 43067 / DSM 2661 / JAL-1 / JCM 10045 / NBRC 100440) (Methanococcus jannaschii).